The sequence spans 323 residues: Phospho-N-acetylmuramoyl-pentapeptide-transferase (323 aa).

9 helical membrane passes run 5–25 (SAVL…PSLI), 57–77 (LLFI…QGLI), 81–101 (LWAL…DDSI), 118–138 (LCQV…GFQM), 140–160 (FGTT…IVGF), 173–193 (LVSG…LVNL), 196–216 (PGYP…LGFF), 225–247 (IFMG…LLLH), and 302–322 (IVFW…ILLV).

The protein belongs to the glycosyltransferase 4 family. MraY subfamily. Requires Mg(2+) as cofactor.

Its subcellular location is the cell membrane. It carries out the reaction UDP-N-acetyl-alpha-D-muramoyl-L-alanyl-gamma-D-glutamyl-L-lysyl-D-alanyl-D-alanine + di-trans,octa-cis-undecaprenyl phosphate = Mur2Ac(oyl-L-Ala-gamma-D-Glu-L-Lys-D-Ala-D-Ala)-di-trans,octa-cis-undecaprenyl diphosphate + UMP. It functions in the pathway cell wall biogenesis; peptidoglycan biosynthesis. Functionally, catalyzes the initial step of the lipid cycle reactions in the biosynthesis of the cell wall peptidoglycan: transfers peptidoglycan precursor phospho-MurNAc-pentapeptide from UDP-MurNAc-pentapeptide onto the lipid carrier undecaprenyl phosphate, yielding undecaprenyl-pyrophosphoryl-MurNAc-pentapeptide, known as lipid I. In Limosilactobacillus reuteri (strain DSM 20016) (Lactobacillus reuteri), this protein is Phospho-N-acetylmuramoyl-pentapeptide-transferase.